A 728-amino-acid chain; its full sequence is MSDRIDRDVINALIAGHFADPFSVLGMHKTTAGLEVRALLPDATDVWVIEPKTGRKLAKLECLDSRGFFSGVIPRRKNFFRYQLAVVWHGQQNLIDDPYRFGPLIQEMDAWLLSEGTHLRPYETLGAHADTMDGVTGTRFSVWAPNARRVSVVGQFNYWDGRRHPMRLRKESGIWELFIPGAHNGQLYKYEMIDANGNLRLKSDPYAFEAQMRPETASLICGLPEKVVQTEERKKANQFDAPISIYEVHLGSWRRHTDNNFWLSYRELADQLVPYAKWMGFTHLELLPINEHPFDGSWGYQPTGLYAPTRRFGTRDDFRYFIDAAHAAGLNVILDWVPGHFPTDDFALAEFDGTNLYEHSDPREGYHQDWNTLIYNYGRREVSNFLVGNALYWIERFGIDALRVDAVASMIYRDYSRKEGEWIPNEFGGRENLEAIEFLRNTNRILGEQVSGAVTMAEESTDFPGVSRPQDMGGLGFWYKWNLGWMHDTLDYMKLDPIYRQYHHDKLTFGMLYNNTENFVLPLSHDEVVHGKKSILDRMPGDAWQKFANLRAYYGWMWAFPGKKLLFMGNEFAQGREWNHDASLDWHLLEGGDNWHHGVQRLVRDLNLTYRHHKAMHELDFDPYGFEWLVVDDKERSVLIFVRRDKEGNEIIVASNFTPVPRHDYRFGINQPGKWREILNTDSMHYHGSNAGNGGTVHSDEIASHGRQHSLSLTLPPLATIWLVREAE.

Asp-405 functions as the Nucleophile in the catalytic mechanism. Residue Glu-458 is the Proton donor of the active site.

The protein belongs to the glycosyl hydrolase 13 family. GlgB subfamily. Monomer.

The enzyme catalyses Transfers a segment of a (1-&gt;4)-alpha-D-glucan chain to a primary hydroxy group in a similar glucan chain.. Its pathway is glycan biosynthesis; glycogen biosynthesis. Functionally, catalyzes the formation of the alpha-1,6-glucosidic linkages in glycogen by scission of a 1,4-alpha-linked oligosaccharide from growing alpha-1,4-glucan chains and the subsequent attachment of the oligosaccharide to the alpha-1,6 position. The protein is 1,4-alpha-glucan branching enzyme GlgB of Shigella dysenteriae serotype 1 (strain Sd197).